A 431-amino-acid chain; its full sequence is Adenylosuccinate synthetase (431 aa).

Residues 13–19 (GDEGKGK) and 41–43 (GHT) each bind GTP. Asp-14 (proton acceptor) is an active-site residue. Asp-14 and Gly-41 together coordinate Mg(2+). IMP is bound by residues 14 to 17 (DEGK), 39 to 42 (NAGH), Thr-130, Arg-144, Gln-225, Thr-240, and Arg-304. Residue His-42 is the Proton donor of the active site. 300 to 306 (ATTGRKR) provides a ligand contact to substrate. GTP-binding positions include Arg-306, 332–334 (KLD), and 415–417 (STG).

It belongs to the adenylosuccinate synthetase family. In terms of assembly, homodimer. Requires Mg(2+) as cofactor.

The protein localises to the cytoplasm. It catalyses the reaction IMP + L-aspartate + GTP = N(6)-(1,2-dicarboxyethyl)-AMP + GDP + phosphate + 2 H(+). It participates in purine metabolism; AMP biosynthesis via de novo pathway; AMP from IMP: step 1/2. Plays an important role in the de novo pathway of purine nucleotide biosynthesis. Catalyzes the first committed step in the biosynthesis of AMP from IMP. The protein is Adenylosuccinate synthetase of Shewanella piezotolerans (strain WP3 / JCM 13877).